The primary structure comprises 322 residues: DNA repair and recombination protein RadA (322 aa).

ATP is bound at residue 105 to 112 (GMFGSGKT).

The protein belongs to the eukaryotic RecA-like protein family.

Its function is as follows. Involved in DNA repair and in homologous recombination. Binds and assemble on single-stranded DNA to form a nucleoprotein filament. Hydrolyzes ATP in a ssDNA-dependent manner and promotes DNA strand exchange between homologous DNA molecules. The protein is DNA repair and recombination protein RadA of Methanococcus maripaludis (Methanococcus deltae).